The following is a 396-amino-acid chain: Elongation factor Tu (396 aa).

The region spanning 10 to 205 (KPHVNIGTIG…AVDESIPDPV (196 aa)) is the tr-type G domain. A G1 region spans residues 19-26 (GHVDHGKT). 19 to 26 (GHVDHGKT) contributes to the GTP binding site. Residue Thr26 coordinates Mg(2+). Residues 62 to 66 (GITIN) are G2. Residues 83 to 86 (DAPG) are G3. Residues 83-87 (DAPGH) and 138-141 (NKAD) contribute to the GTP site. Residues 138–141 (NKAD) are G4. Positions 175 to 177 (SAL) are G5.

This sequence belongs to the TRAFAC class translation factor GTPase superfamily. Classic translation factor GTPase family. EF-Tu/EF-1A subfamily. Monomer.

It localises to the cytoplasm. The catalysed reaction is GTP + H2O = GDP + phosphate + H(+). GTP hydrolase that promotes the GTP-dependent binding of aminoacyl-tRNA to the A-site of ribosomes during protein biosynthesis. The polypeptide is Elongation factor Tu (Rhodococcus erythropolis (strain PR4 / NBRC 100887)).